The primary structure comprises 359 residues: G-protein coupled receptor 15 (359 aa).

The Extracellular segment spans residues 1–33; that stretch reads MDPEETSVYLDYYYATSPNPDIRETHSHVPYTS. The chain crosses the membrane as a helical span at residues 34–54; the sequence is VFLPVFYTAVFLTGVLGNLVL. Residues 55–69 lie on the Cytoplasmic side of the membrane; the sequence is MGALHFKPGSRRLID. A helical transmembrane segment spans residues 70–90; the sequence is IFIINLAASDFIFLVTLPLWV. Residues 91–120 lie on the Extracellular side of the membrane; the sequence is DKEASLGLWRTGSFLCKGSSYMISVNMHCS. The helical transmembrane segment at 121 to 141 threads the bilayer; sequence VFLLTCMSVDRYLAIVCPVVS. The Cytoplasmic portion of the chain corresponds to 142–149; it reads RKFRRTDC. The helical transmembrane segment at 150–170 threads the bilayer; sequence AYVVCASIWFISCLLGLPTLL. Topologically, residues 171–192 are extracellular; sequence SRELTLIDDKPYCAEKKATPLK. The chain crosses the membrane as a helical span at residues 193–213; that stretch reads LIWSLVALIFTFFVPLLNIVT. Over 214 to 239 the chain is Cytoplasmic; the sequence is CYCCIARKLCAHYQQSGRHNKKLKKS. A helical transmembrane segment spans residues 240–260; sequence IKIILIVVAAFLVSWLPFNTF. Residues 261–283 lie on the Extracellular side of the membrane; it reads KLLAIVSGLQERYFPSAMLQLGM. A helical transmembrane segment spans residues 284 to 304; that stretch reads EVSGPLAFANSCVNPFIYYIF. Topologically, residues 305 to 359 are cytoplasmic; sequence DSYIRRAIVHCLCPCLKNYDFGSSTETSDSHLTKALSTFIHAEDFTRRRKRSVSL. Ser358 is modified (phosphoserine).

Belongs to the G-protein coupled receptor 1 family. Interacts with adapter YWHAE; this interaction promotes ER-to-Golgi transport of GPR15. Phosphorylation is necessary for YWHAE binding and efficient surface expression. Post-translationally, O-glycosylated. Sialylated O-glycans in the N-terminal tail inhibits binding of GPR15LG. In terms of processing, sulfation is required for efficient binding of GPR15LG.

It localises to the cell membrane. G protein-coupled receptor that plays an important role in immune homeostasis. Acts via its natural ligand GPR15LG, a chemokine-like polypeptide strongly expressed in gastrointestinal tissues. GPR15-GPR15LG signaling axis regulates intestinal homeostasis and inflammation through the migration of immune cells. Controls thereby the specific homing of T-cells, particularly FOXP3+ regulatory T-cells (Tregs), to the large intestine lamina propria. Also required for skin localization of thymus-derived dendritic epidermal T-cells. Plays an important role in mediating cytoprotective function as well as angiogenesis of thrombomodulin. Mechanistically, preferentially signals through the Gi/o pathway to inhibit adenylate cyclase activity and activate a phosphatidylinositol-calcium second messenger system that regulates the release of Ca(2+) ions from intracellular stores. The chain is G-protein coupled receptor 15 (GPR15) from Macaca fascicularis (Crab-eating macaque).